Reading from the N-terminus, the 602-residue chain is Elongation factor 4 (602 aa).

Positions 6-188 (KYIRNFCIIA…AIIRRVPPPR (183 aa)) constitute a tr-type G domain. GTP contacts are provided by residues 18-23 (DHGKST) and 135-138 (NKID).

It belongs to the TRAFAC class translation factor GTPase superfamily. Classic translation factor GTPase family. LepA subfamily.

Its subcellular location is the cell membrane. It catalyses the reaction GTP + H2O = GDP + phosphate + H(+). Required for accurate and efficient protein synthesis under certain stress conditions. May act as a fidelity factor of the translation reaction, by catalyzing a one-codon backward translocation of tRNAs on improperly translocated ribosomes. Back-translocation proceeds from a post-translocation (POST) complex to a pre-translocation (PRE) complex, thus giving elongation factor G a second chance to translocate the tRNAs correctly. Binds to ribosomes in a GTP-dependent manner. This is Elongation factor 4 from Moorella thermoacetica (strain ATCC 39073 / JCM 9320).